The following is a 472-amino-acid chain: Probable endopolygalacturonase D (472 aa).

Residues 1 to 16 (MKRGALLVPFVPLALA) form the signal peptide. Asn24 is a glycosylation site (N-linked (GlcNAc...) asparagine). A disulfide bridge links Cys129 with Cys144. PbH1 repeat units follow at residues 236 to 258 (MYYSRIENLNIQNWPVHCFDIEH), 259 to 297 (TENLIISGITLDNSAGDAPNSASGSKPAAHNSDGFDIKS), and 298 to 319 (STNLTLQNSWVHNQDDCVAVSS). Asn300 carries an N-linked (GlcNAc...) asparagine glycan. Asp312 (proton donor) is an active-site residue. A disulfide bridge links Cys314 with Cys330. The active site involves His334. PbH1 repeat units follow at residues 349–370 (VDGVTFSNSQVINSSNGCRIKS), 378–400 (VSNIRYENITVSGITDYGIDIQQ), 412–433 (TNGVKIENITFVDVTGTMSDGK), and 444–467 (CSNFVFENVGITGGSGDSCNYPTD). N-linked (GlcNAc...) asparagine glycans are attached at residues Asn361, Asn385, and Asn419. Intrachain disulfides connect Cys439/Cys444 and Cys462/Cys469.

This sequence belongs to the glycosyl hydrolase 28 family.

It localises to the secreted. The catalysed reaction is (1,4-alpha-D-galacturonosyl)n+m + H2O = (1,4-alpha-D-galacturonosyl)n + (1,4-alpha-D-galacturonosyl)m.. Its function is as follows. Involved in maceration and soft-rotting of plant tissue. Hydrolyzes the 1,4-alpha glycosidic bonds of de-esterified pectate in the smooth region of the plant cell wall. In Neosartorya fischeri (strain ATCC 1020 / DSM 3700 / CBS 544.65 / FGSC A1164 / JCM 1740 / NRRL 181 / WB 181) (Aspergillus fischerianus), this protein is Probable endopolygalacturonase D (pgaD).